Here is a 521-residue protein sequence, read N- to C-terminus: Cytochrome P450 1A1 (521 aa).

Phe-229 serves as a coordination point for substrate. Heme is bound at residue Cys-463.

The protein belongs to the cytochrome P450 family. Heme serves as cofactor.

It localises to the endoplasmic reticulum membrane. Its subcellular location is the microsome membrane. The catalysed reaction is an organic molecule + reduced [NADPH--hemoprotein reductase] + O2 = an alcohol + oxidized [NADPH--hemoprotein reductase] + H2O + H(+). In terms of biological role, cytochromes P450 are a group of heme-thiolate monooxygenases. They oxidize a variety of structurally unrelated compounds, including steroids, fatty acids, and xenobiotics. In Chaetodon capistratus (Four-eye butterflyfish), this protein is Cytochrome P450 1A1 (cyp1a1).